Reading from the N-terminus, the 338-residue chain is MLGCSSLSIRTTDDKSLFARTMDFTMEPDSKVIIVPRNYGIRLLEKENVVINNSYAFVGMGSTDITSPVLYDGVNEKGLMGAMLYYATFATYADEPKKGTTGINPVYVISQVLGNCVTVDDVIEKLTSYTLLNEANIILGFAPPLHYTFTDASGESIVIEPDKTGITIHRKTIGVMTNSPGYEWHQTNLRAYIGVTPNPPQDIMMGDLDLTPFGQGAGGLGLPGDFTPSARFLRVAYWKKYTEKAKNETEGVTNLFHILSSVNIPKGVVLTNEGKTDYTIYTSAMCAQSKNYYFKLYDNSRISAVSLMAENLNSQDLITFEWDRKQDIKQLNQVNVMS.

The propeptide at 1 to 3 (MLG) is removed in mature form. The active-site Nucleophile is the C4.

It belongs to the peptidase C59 family. As to quaternary structure, homotetramer. Expressed as an inactive precursor that is cleaved autocatalytically at Gly-3/Cys-4 to generate an active enzyme. Processing exposes a catalytic N-terminal nucleophile residue with a free alpha amino group.

It catalyses the reaction a penicillin + H2O = 6-aminopenicillanate + a carboxylate. Hydrolase activity is rapidly inhibited by lysine modifying reagents. Functionally, catalyzes the hydrolysis of penicillin V to 6-aminopenicillanate (6-APA). Exhibits high specificity for penicillin V. Penicillin G and other related compounds are hydrolyzed at less than 10% of the rate of penicillin V. Among the cephalosporins, cephalosporin C is resistant to cleavage, whereas cephalosporin G is cleaved at about 1% of the rate of cleavage of penicillin V. The polypeptide is Penicillin V acylase (Lysinibacillus sphaericus (Bacillus sphaericus)).